A 507-amino-acid chain; its full sequence is UDP-glycosyltransferase 73D1 (507 aa).

UDP-alpha-D-glucose-binding positions include S298, 359-361, 376-384, and 398-401; these read SPQ, HCGWNSTIE, and FAEQ.

It belongs to the UDP-glycosyltransferase family.

In Arabidopsis thaliana (Mouse-ear cress), this protein is UDP-glycosyltransferase 73D1 (UGT73D1).